The primary structure comprises 137 residues: Fluoride-specific ion channel FluC 1 (137 aa).

The next 4 helical transmembrane spans lie at 3–23 (PLVV…RLVL), 42–62 (INVT…GHGL), 69–89 (ILGT…YEAV), and 107–127 (MMFL…LAVA). The Na(+) site is built by G76 and T79.

Belongs to the fluoride channel Fluc/FEX (TC 1.A.43) family.

Its subcellular location is the cell membrane. The enzyme catalyses fluoride(in) = fluoride(out). Na(+) is not transported, but it plays an essential structural role and its presence is essential for fluoride channel function. In terms of biological role, fluoride-specific ion channel. Important for reducing fluoride concentration in the cell, thus reducing its toxicity. In Leifsonia xyli subsp. xyli (strain CTCB07), this protein is Fluoride-specific ion channel FluC 1.